Consider the following 259-residue polypeptide: DNA-directed RNA polymerase 30 kDa polypeptide (259 aa).

Residues 155 to 195 form a TFIIS-type zinc finger; it reads YNTPCPNCKSRNTTPMMIQTRAADEPPLVRHACRDCKQHFK. Positions 159, 162, 187, and 190 each coordinate Zn(2+). Positions 220-259 are disordered; it reads EILPDNNPSPPESPEPASPIDDGLIRVTFDRNDEPPEDDE. Over residues 226-236 the composition is skewed to pro residues; that stretch reads NPSPPESPEPA.

Belongs to the poxviridae DNA-directed RNA polymerase 30 kDa subunit family. As to quaternary structure, the DNA-dependent RNA polymerase (vRNAP) consists of eight subunits encoded by early viral genes and termed according to their apparent molecular masses Rpo147, Rpo132, Rpo35, Rpo30, Rpo22, Rpo19, Rpo18, and Rpo7. The same holoenzyme, with the addition of the transcription-specificity factor RAP94, is used for early gene expression.

It localises to the virion. The protein resides in the host cytoplasm. It catalyses the reaction RNA(n) + a ribonucleoside 5'-triphosphate = RNA(n+1) + diphosphate. Functionally, part of the DNA-dependent RNA polymerase which catalyzes the transcription of viral DNA into RNA using the four ribonucleoside triphosphates as substrates. Responsible for the transcription of early, intermediate and late genes. DNA-dependent RNA polymerase associates with the early transcription factor (ETF), itself composed of OPG118 and OPG134, thereby allowing the early genes transcription. Late transcription, and probably also intermediate transcription, require newly synthesized RNA polymerase. The polypeptide is DNA-directed RNA polymerase 30 kDa polypeptide (OPG066) (Variola virus (isolate Human/India/Ind3/1967) (VARV)).